We begin with the raw amino-acid sequence, 307 residues long: MQAALTAFFMLLFSLLSLLGIAANGFIVLVLGREWLRYGRLLPLDMILISLGASRFCLQLVGTVHNFYYSAQKVEYSGGLGRQFFHLHWHFLNSATFWFCSWLSVLFCVKIANITHPTFLWLKWRFPGWVPWLLLGSVLISFIITLLFFWVNYPAYQEFLIRKFSVNMTYKWNTRIETYYFPSLKLVIWSIPFSVFLVSIMLLINSLRRHTQRMQHNGHSLQDPSTQAHTRALKSLISFLILYALSFLSLIIDATKFISMQNDFYWPWQIAVYLCISVHPFILIFSNLKLRSVFSQLLLLARGFWVA.

At 1–7 (MQAALTA) the chain is on the extracellular side. The chain crosses the membrane as a helical span at residues 8 to 28 (FFMLLFSLLSLLGIAANGFIV). At 29–40 (LVLGREWLRYGR) the chain is on the cytoplasmic side. A helical transmembrane segment spans residues 41 to 61 (LLPLDMILISLGASRFCLQLV). At 62-88 (GTVHNFYYSAQKVEYSGGLGRQFFHLH) the chain is on the extracellular side. A helical membrane pass occupies residues 89-109 (WHFLNSATFWFCSWLSVLFCV). Over 110 to 129 (KIANITHPTFLWLKWRFPGW) the chain is Cytoplasmic. A helical membrane pass occupies residues 130-150 (VPWLLLGSVLISFIITLLFFW). Over 151-183 (VNYPAYQEFLIRKFSVNMTYKWNTRIETYYFPS) the chain is Extracellular. An N-linked (GlcNAc...) asparagine glycan is attached at asparagine 167. A helical membrane pass occupies residues 184–204 (LKLVIWSIPFSVFLVSIMLLI). The Cytoplasmic segment spans residues 205-234 (NSLRRHTQRMQHNGHSLQDPSTQAHTRALK). A helical membrane pass occupies residues 235-255 (SLISFLILYALSFLSLIIDAT). Residues 256 to 264 (KFISMQNDF) lie on the Extracellular side of the membrane. The chain crosses the membrane as a helical span at residues 265-285 (YWPWQIAVYLCISVHPFILIF). Residues 286–307 (SNLKLRSVFSQLLLLARGFWVA) lie on the Cytoplasmic side of the membrane.

Belongs to the G-protein coupled receptor T2R family.

It is found in the membrane. Functionally, receptor that may play a role in the perception of bitterness and is gustducin-linked. May play a role in sensing the chemical composition of the gastrointestinal content. The activity of this receptor may stimulate alpha gustducin, mediate PLC-beta-2 activation and lead to the gating of TRPM5. In Pan troglodytes (Chimpanzee), this protein is Taste receptor type 2 member 41 (TAS2R41).